The chain runs to 154 residues: 3-hydroxyacyl-[acyl-carrier-protein] dehydratase FabZ (154 aa).

The active site involves histidine 55.

Belongs to the thioester dehydratase family. FabZ subfamily.

It is found in the cytoplasm. The enzyme catalyses a (3R)-hydroxyacyl-[ACP] = a (2E)-enoyl-[ACP] + H2O. Its function is as follows. Involved in unsaturated fatty acids biosynthesis. Catalyzes the dehydration of short chain beta-hydroxyacyl-ACPs and long chain saturated and unsaturated beta-hydroxyacyl-ACPs. The polypeptide is 3-hydroxyacyl-[acyl-carrier-protein] dehydratase FabZ (Nitratidesulfovibrio vulgaris (strain DSM 19637 / Miyazaki F) (Desulfovibrio vulgaris)).